Consider the following 222-residue polypeptide: 2-C-methyl-D-erythritol 4-phosphate cytidylyltransferase (222 aa).

Belongs to the IspD/TarI cytidylyltransferase family. IspD subfamily.

The enzyme catalyses 2-C-methyl-D-erythritol 4-phosphate + CTP + H(+) = 4-CDP-2-C-methyl-D-erythritol + diphosphate. It participates in isoprenoid biosynthesis; isopentenyl diphosphate biosynthesis via DXP pathway; isopentenyl diphosphate from 1-deoxy-D-xylulose 5-phosphate: step 2/6. Functionally, catalyzes the formation of 4-diphosphocytidyl-2-C-methyl-D-erythritol from CTP and 2-C-methyl-D-erythritol 4-phosphate (MEP). This chain is 2-C-methyl-D-erythritol 4-phosphate cytidylyltransferase, found in Porphyromonas gingivalis (strain ATCC 33277 / DSM 20709 / CIP 103683 / JCM 12257 / NCTC 11834 / 2561).